Reading from the N-terminus, the 361-residue chain is Carbamoyl phosphate synthase small chain (361 aa).

The interval 1–173 (MRAALALEDG…SVREEYRFSD (173 aa)) is CPSase. The L-glutamine site is built by S45, G225, and G227. Residues 177–361 (EIVVIDCGVK…DEFLAMCREH (185 aa)) form the Glutamine amidotransferase type-1 domain. Residue C252 is the Nucleophile of the active site. The L-glutamine site is built by L253, Q256, N294, G296, and F297. Catalysis depends on residues H337 and E339.

It belongs to the CarA family. In terms of assembly, composed of two chains; the small (or glutamine) chain promotes the hydrolysis of glutamine to ammonia, which is used by the large (or ammonia) chain to synthesize carbamoyl phosphate. Tetramer of heterodimers (alpha,beta)4.

The enzyme catalyses hydrogencarbonate + L-glutamine + 2 ATP + H2O = carbamoyl phosphate + L-glutamate + 2 ADP + phosphate + 2 H(+). It catalyses the reaction L-glutamine + H2O = L-glutamate + NH4(+). It participates in amino-acid biosynthesis; L-arginine biosynthesis; carbamoyl phosphate from bicarbonate: step 1/1. Its pathway is pyrimidine metabolism; UMP biosynthesis via de novo pathway; (S)-dihydroorotate from bicarbonate: step 1/3. Functionally, small subunit of the glutamine-dependent carbamoyl phosphate synthetase (CPSase). CPSase catalyzes the formation of carbamoyl phosphate from the ammonia moiety of glutamine, carbonate, and phosphate donated by ATP, constituting the first step of 2 biosynthetic pathways, one leading to arginine and/or urea and the other to pyrimidine nucleotides. The small subunit (glutamine amidotransferase) binds and cleaves glutamine to supply the large subunit with the substrate ammonia. This Methanopyrus kandleri (strain AV19 / DSM 6324 / JCM 9639 / NBRC 100938) protein is Carbamoyl phosphate synthase small chain.